The following is a 328-amino-acid chain: Fructokinase-2 (328 aa).

This sequence belongs to the carbohydrate kinase PfkB family.

It carries out the reaction D-fructose + ATP = D-fructose 6-phosphate + ADP + H(+). It participates in glycan biosynthesis; starch biosynthesis. Its function is as follows. May play an important role in maintaining the flux of carbon towards starch formation. The sequence is that of Fructokinase-2 (FRK2) from Solanum habrochaites (Wild tomato).